A 611-amino-acid polypeptide reads, in one-letter code: Putative pentatricopeptide repeat-containing protein At1g56570 (611 aa).

13 PPR repeats span residues 44 to 74 (HHIL…MPDR), 75 to 109 (DVVA…GTSP), 110 to 144 (NEFT…GMEG), 145 to 176 (SLYV…IKVK), 177 to 211 (NDVT…NAEV), 212 to 246 (TPYC…GFQS), 247 to 281 (NLPV…DLIT), 282 to 311 (WNTL…GFVP), 312 to 346 (NCYT…GFNK), 347 to 377 (NVEL…IVDR), 379 to 413 (NLVS…GIRP), 414 to 444 (DRIV…MESE), and 450 to 480 (DRDI…MPFK). A type E motif region spans residues 485 to 561 (TWGAILGACK…EAGMSWILVE (77 aa)). The segment at 562–592 (NQVFSFAVSDKMCPNASSVYSVLGLLIEETR) is type E(+) motif.

It belongs to the PPR family. PCMP-E subfamily.

This chain is Putative pentatricopeptide repeat-containing protein At1g56570 (PCMP-E64), found in Arabidopsis thaliana (Mouse-ear cress).